The primary structure comprises 361 residues: Glutaminyl-peptide cyclotransferase (361 aa).

A signal peptide spans 1–28 (MAGGRHRRVVGTLHLLLLVAALPWASRG). Asn49 carries an N-linked (GlcNAc...) asparagine glycan. Cys139 and Cys164 are disulfide-bonded. Residue Asp159 participates in Zn(2+) binding. Glu201 acts as the Proton acceptor in catalysis. Zn(2+) is bound at residue Glu202. Asp248 functions as the Proton acceptor in the catalytic mechanism. A glycan (N-linked (GlcNAc...) asparagine) is linked at Asn296. His330 serves as a coordination point for Zn(2+).

The protein belongs to the glutaminyl-peptide cyclotransferase family.

The protein resides in the secreted. It catalyses the reaction N-terminal L-glutaminyl-[peptide] = N-terminal 5-oxo-L-prolyl-[peptide] + NH4(+). Responsible for the biosynthesis of pyroglutamyl peptides. Has a bias against acidic and tryptophan residues adjacent to the N-terminal glutaminyl residue and a lack of importance of chain length after the second residue. Also catalyzes N-terminal pyroglutamate formation. In vitro, catalyzes pyroglutamate formation of N-terminally truncated form of APP amyloid-beta peptides [Glu-3]-amyloid-beta. May be involved in the N-terminal pyroglutamate formation of several amyloid-related plaque-forming peptides. The sequence is that of Glutaminyl-peptide cyclotransferase (QPCT) from Homo sapiens (Human).